Consider the following 416-residue polypeptide: MTDMRRLGQRAKQASLLIAPLSTQIKNRFLSTLAKALVDDTQTLLAANQKDLANAKEHGISDIMMDRLRLTSERIKAIAQGVQQVADLADPIGQVIKGYTNLDGLKILQKRVPLGVIAMIFESRPNVSVDAFSLAFKTNNAIILRGGKDALHSNKALVKLIRQSLEKSGITPDAVQLVEDPSHAVAEELMQATDYVDVLIPRGGAKLIQTVKEKAKVPVIETGVGNVHIYVDAQADLDIATKIVINAKTKRPSVCNAAEGLVIHEAVAARFIPMLEKAINQVQPVEWRADDKALPLFEQAVPAKAEDFETEFLDYIMSVKVVSSLEEAISWINQYTSHHSEAIITRDIKAAETFQDLVDAAAVYVNASTRFTDGFVFGLGAEIGISTQKMHARGPMGLEALTSTKFYINGDGHIRE.

It belongs to the gamma-glutamyl phosphate reductase family.

It localises to the cytoplasm. It carries out the reaction L-glutamate 5-semialdehyde + phosphate + NADP(+) = L-glutamyl 5-phosphate + NADPH + H(+). The protein operates within amino-acid biosynthesis; L-proline biosynthesis; L-glutamate 5-semialdehyde from L-glutamate: step 2/2. Catalyzes the NADPH-dependent reduction of L-glutamate 5-phosphate into L-glutamate 5-semialdehyde and phosphate. The product spontaneously undergoes cyclization to form 1-pyrroline-5-carboxylate. The sequence is that of Gamma-glutamyl phosphate reductase from Streptococcus pyogenes serotype M1.